A 486-amino-acid chain; its full sequence is Serine/threonine-protein phosphatase 2A 56 kDa regulatory subunit alpha isoform (486 aa).

Positions 1–18 (MSSSSPPAGAASAAISAS) are enriched in low complexity. The interval 1–52 (MSSSSPPAGAASAAISASEKVDGFTRKSVRKAQRQKRSQGSSQFRSQGSQAE) is disordered. The residue at position 2 (Ser-2) is an N-acetylserine. The span at 27-37 (KSVRKAQRQKR) shows a compositional bias: basic residues. Residues 38–51 (SQGSSQFRSQGSQA) show a composition bias toward low complexity. Phosphoserine is present on residues Ser-41, Ser-42, and Ser-49.

It belongs to the phosphatase 2A regulatory subunit B56 family. As to quaternary structure, PP2A consists of a common heterodimeric core enzyme, composed of a 36 kDa catalytic subunit (subunit C) and a 65 kDa constant regulatory subunit (PR65 or subunit A), that associates with a variety of regulatory subunits. Proteins that associate with the core dimer include three families of regulatory subunits B (the R2/B/PR55/B55, R3/B''/PR72/PR130/PR59 and R5/B'/B56 families), the 48 kDa variable regulatory subunit, viral proteins, and cell signaling molecules. Interacts with SGO1. Phosphorylated on serine residues. As to expression, widely expressed with the highest expression in heart and skeletal muscle.

The protein resides in the cytoplasm. Its subcellular location is the nucleus. The protein localises to the chromosome. It is found in the centromere. In terms of biological role, the B regulatory subunit might modulate substrate selectivity and catalytic activity, and might also direct the localization of the catalytic enzyme to a particular subcellular compartment. The polypeptide is Serine/threonine-protein phosphatase 2A 56 kDa regulatory subunit alpha isoform (PPP2R5A) (Homo sapiens (Human)).